Reading from the N-terminus, the 575-residue chain is E3 ubiquitin-protein ligase IpaH1.4 (575 aa).

The interval 1 to 270 is interaction with target proteins; it reads MIKSTNIQAI…PDYSGPQIFF (270 aa). LRR repeat units follow at residues 69 to 90, 91 to 115, 117 to 130, 131 to 150, 151 to 170, 171 to 195, 197 to 209, and 210 to 233; these read LQNQ…PDLP, PQIT…MLKV, HAQF…PALP, ETLE…PFLP, ENLT…PLLP, PELK…KLEG, ALAN…LPEL, and PFSM…VLRL. Residues 271-281 are linker; the sequence is SMGNSATISAP. The interval 282–575 is E3 ubiquitin-protein ligase catalytic domain; it reads EHSLADAVTA…LSENGSNHIA (294 aa). The 292-residue stretch at 284–575 folds into the NEL domain; sequence SLADAVTAWF…LSENGSNHIA (292 aa). Residue C368 is the Glycyl thioester intermediate of the active site.

It belongs to the LRR-containing bacterial E3 ligase family. As to quaternary structure, interacts with human RBCK1/HOIL-1 and RNF31/HOIP components of the LUBAC complex. Post-translationally, ubiquitinated in the presence of host E1 ubiquitin-activating enzyme, E2 ubiquitin-conjugating enzyme and ubiquitin.

Its subcellular location is the secreted. The protein localises to the host cytoplasm. The enzyme catalyses S-ubiquitinyl-[E2 ubiquitin-conjugating enzyme]-L-cysteine + [acceptor protein]-L-lysine = [E2 ubiquitin-conjugating enzyme]-L-cysteine + N(6)-ubiquitinyl-[acceptor protein]-L-lysine.. Its pathway is protein modification; protein ubiquitination. Its activity is regulated as follows. Exists in an autoinhibited state in the absence of substrate protein, probably due to interactions of the leucine-rich repeat domain with the catalytic domain. Is activated upon binding to a substrate protein. E3 ubiquitin-protein ligase effector that inhibits host cell innate immunity during bacterial infection by catalyzing 'Lys-48'-linked polyubiquitination and subsequent degradation of host RNF31/HOIP and RBCK1/HOIL-1. Host RNF31/HOIP is the catalytic component of the LUBAC complex, which conjugates linear ('Met-1'-linked) polyubiquitin chains at the surface of bacteria invading the host cytosol to form the ubiquitin coat surrounding bacteria. The bacterial ubiquitin coat acts as an 'eat-me' signal for xenophagy and promotes NF-kappa-B activation. By promoting degradation of host RNF31/HOIP, IpaH1.4 prevents formation of the bacterial ubiquitin coat and activation of host cell innate immunity. This Shigella flexneri protein is E3 ubiquitin-protein ligase IpaH1.4.